The sequence spans 169 residues: S-ribosylhomocysteine lyase (169 aa).

Fe cation contacts are provided by H54, H58, and C128.

This sequence belongs to the LuxS family. As to quaternary structure, homodimer. Fe cation serves as cofactor.

The enzyme catalyses S-(5-deoxy-D-ribos-5-yl)-L-homocysteine = (S)-4,5-dihydroxypentane-2,3-dione + L-homocysteine. Functionally, involved in the synthesis of autoinducer 2 (AI-2) which is secreted by bacteria and is used to communicate both the cell density and the metabolic potential of the environment. The regulation of gene expression in response to changes in cell density is called quorum sensing. Catalyzes the transformation of S-ribosylhomocysteine (RHC) to homocysteine (HC) and 4,5-dihydroxy-2,3-pentadione (DPD). The protein is S-ribosylhomocysteine lyase of Shewanella sp. (strain MR-7).